Reading from the N-terminus, the 453-residue chain is Probable multidrug resistance protein NorM (453 aa).

Helical transmembrane passes span 12 to 34, 54 to 76, 96 to 118, 128 to 150, 162 to 184, 194 to 216, 243 to 265, 285 to 307, 319 to 338, 358 to 380, 387 to 406, and 416 to 438; these read VLFLKIFFPILIYQFANYSASFV, TSIWNPFFTFLTGIVSALVPIIG, YLALGLSVVLLGMVLFLAPTILN, AVAVRYLWFLSIGIIPLLLFSVI, LSMYLMLLLLPLNSGFNYLLIYG, AGAGLGTSLAYWVLLGISVLVLF, LGLPIGGTVFAEVAVFSVVGLIM, LMYAFPMSISSAMAIVVSYEVGA, LGRWTALIFAAFTLTFLYIF, RFLTYSLFFQLADTFAAPLQGIL, VIPFYLGLLGYWGVAIPVAT, and AYSYWIGLIISLIVSGALYRWRL.

It belongs to the multi antimicrobial extrusion (MATE) (TC 2.A.66.1) family.

It localises to the cell membrane. In terms of biological role, multidrug efflux pump. This is Probable multidrug resistance protein NorM (norM) from Streptococcus pneumoniae (strain ATCC BAA-255 / R6).